The following is a 1135-amino-acid chain: uncharacterized protein (1135 aa).

Positions 1-28 (MALFPRGILIALVLSFVLNLGLVTKIHA) are cleaved as a signal peptide. Helical transmembrane passes span 332–352 (IVTA…LLAG), 359–379 (EYIN…GINI), 393–413 (MIQW…NWVM), 495–515 (MLVS…AFMV), 522–542 (MISI…FLFA), 555–575 (MISF…MFAV), and 700–720 (IKNI…MYNF).

The protein belongs to the TrbL/VirB6 family.

Its subcellular location is the cell membrane. This is an uncharacterized protein from Rickettsia typhi (strain ATCC VR-144 / Wilmington).